An 814-amino-acid chain; its full sequence is Acyl-coenzyme A dehydrogenase (814 aa).

Glu497 (proton acceptor) is an active-site residue.

Belongs to the acyl-CoA dehydrogenase family. FAD serves as cofactor.

It catalyses the reaction a medium-chain 2,3-saturated fatty acyl-CoA + oxidized [electron-transfer flavoprotein] + H(+) = a medium-chain (2E)-enoyl-CoA + reduced [electron-transfer flavoprotein]. It carries out the reaction a long-chain 2,3-saturated fatty acyl-CoA + oxidized [electron-transfer flavoprotein] + H(+) = a long-chain (2E)-enoyl-CoA + reduced [electron-transfer flavoprotein]. It participates in lipid metabolism; fatty acid beta-oxidation. Catalyzes the dehydrogenation of acyl-coenzymes A (acyl-CoAs) to 2-enoyl-CoAs, the first step of the beta-oxidation cycle of fatty acid degradation. Is required for the utilization of medium- and long-chain fatty acids as sole carbon sources for growth. Is needed for bacterial survival during carbone-source starvation. This is Acyl-coenzyme A dehydrogenase (fadE) from Salmonella typhi.